The primary structure comprises 201 residues: Ribonuclease HII (201 aa).

In terms of domain architecture, RNase H type-2 spans 15–201; sequence QRVAGVDEVG…FRPVRRFLEA (187 aa). Asp21, Glu22, and Asp113 together coordinate a divalent metal cation.

Belongs to the RNase HII family. The cofactor is Mn(2+). Mg(2+) is required as a cofactor.

The protein localises to the cytoplasm. The catalysed reaction is Endonucleolytic cleavage to 5'-phosphomonoester.. Functionally, endonuclease that specifically degrades the RNA of RNA-DNA hybrids. This Nitrosococcus oceani (strain ATCC 19707 / BCRC 17464 / JCM 30415 / NCIMB 11848 / C-107) protein is Ribonuclease HII.